Reading from the N-terminus, the 434-residue chain is Zinc finger protein kipf (434 aa).

Residues 7–88 (NVCRTCMDET…EQSYQHFFRV (82 aa)) enclose the ZAD domain. Cysteine 9, cysteine 12, cysteine 61, and cysteine 64 together coordinate Zn(2+). The tract at residues 117–173 (QLKSDRQQDTQQMTKTQKPDDDLSQKQTLQAKLQEGNIDGPPESFTLHPRKRTCRTE) is disordered. A C2H2-type 1; degenerate zinc finger spans residues 197-219 (YNCPHCSKRFCSQTQLRTHITDL). 3 C2H2-type zinc fingers span residues 221 to 243 (NRCP…LRNH), 249 to 271 (HKCF…LRTH), and 277 to 299 (LSCS…RREH). The tract at residues 295-328 (HRREHKQRPGSSKSESTKDPDSDDSDQAQDLKPK) is disordered. 2 positions are modified to phosphoserine: serine 316 and serine 319. C2H2-type zinc fingers lie at residues 348–370 (PICD…MLTH), 377–399 (KKCT…ERGH), and 404–427 (FRCE…KRIH).

In terms of assembly, homodimer; mediated by the ZAD domain. Interacts (via C2H2 type zinc finger 4) with rhi/rhino (via Chromo domain). Dimerization is required for association with DNA and interaction with rhi/rhino. Primarily expressed in ovaries and absent from testes. In ovaries very low levels in germline stem cells and cystoblasts but abundant in developing cysts and polyploid nurse cells.

Its subcellular location is the nucleus. The protein localises to the chromosome. Functionally, DNA-binding zinc finger protein that recruits chromo domain protein rhino/rhi to specific chromatin regions enriched in H3K9me2/3 histone methylation, mediating piRNA (piwi-interacting RNA) biogenesis. May bind to GC rich DNA sequences including a 5'-GRGGN-3' sequence motif. Nucleates rhi/rhino accumulation and stabilizes its expansion. Involved in piRNA transposon repression, particularly in the female ovary during oogenesis. This is Zinc finger protein kipf from Drosophila melanogaster (Fruit fly).